The primary structure comprises 432 residues: MINRYSRPEMANIWSEENKYRAWLEVEILADEAWAELGEIPKEDVAKIREKADFDIDRILEIEQQTRHDVVAFTRAVSETLGEERKWVHFGLTSTDVVDTAYGYLYKQANAIIRKDLDNFLSIIADKAKEHKFTIMMGRTHGVHAEPTTFGLKLATWYSEMKRNIERFEHAAAGVEAGKISGAVGNFANIPPFVEKYVCDKLGIRAQEISTQVLPRDLHAEYFAVLASIATSIERMATEIRGLQKSEQREVEEFFAKGQKGSSAMPHKRNPIGSENMTGLARVIRGHMVTAYENVSLWHERDISHSSAERIIAPDTTILIDYMLNRFGNIVKNLTVFPENMKRNMGSTFGLIFSQRAMLTLIEKGMTREQAYDLVQPKTAQSWDNQVDFKPLLEADPEITSRLSQEEIDEIFNPVYYTKRVDEIFDRIGLGD.

N(6)-(1,2-dicarboxyethyl)-AMP contacts are provided by residues 4–5 (RY), 67–69 (RHD), and 93–94 (TS). His-141 functions as the Proton donor/acceptor in the catalytic mechanism. Residue Gln-212 participates in N(6)-(1,2-dicarboxyethyl)-AMP binding. Residue Ser-262 is the Proton donor/acceptor of the active site. Residues Ser-263, 268–270 (KRN), Asn-276, and 307–311 (SAERI) contribute to the N(6)-(1,2-dicarboxyethyl)-AMP site.

It belongs to the lyase 1 family. Adenylosuccinate lyase subfamily. Homodimer and homotetramer. Residues from neighboring subunits contribute catalytic and substrate-binding residues to each active site.

It carries out the reaction N(6)-(1,2-dicarboxyethyl)-AMP = fumarate + AMP. It catalyses the reaction (2S)-2-[5-amino-1-(5-phospho-beta-D-ribosyl)imidazole-4-carboxamido]succinate = 5-amino-1-(5-phospho-beta-D-ribosyl)imidazole-4-carboxamide + fumarate. It functions in the pathway purine metabolism; AMP biosynthesis via de novo pathway; AMP from IMP: step 2/2. It participates in purine metabolism; IMP biosynthesis via de novo pathway; 5-amino-1-(5-phospho-D-ribosyl)imidazole-4-carboxamide from 5-amino-1-(5-phospho-D-ribosyl)imidazole-4-carboxylate: step 2/2. Its function is as follows. Catalyzes two reactions in de novo purine nucleotide biosynthesis. Catalyzes the breakdown of 5-aminoimidazole- (N-succinylocarboxamide) ribotide (SAICAR or 2-[5-amino-1-(5-phospho-beta-D-ribosyl)imidazole-4-carboxamido]succinate) to 5-aminoimidazole-4-carboxamide ribotide (AICAR or 5-amino-1-(5-phospho-beta-D-ribosyl)imidazole-4-carboxamide) and fumarate, and of adenylosuccinate (ADS or N(6)-(1,2-dicarboxyethyl)-AMP) to adenosine monophosphate (AMP) and fumarate. The chain is Adenylosuccinate lyase (purB) from Streptococcus mutans serotype c (strain ATCC 700610 / UA159).